Here is a 320-residue protein sequence, read N- to C-terminus: Phosphate acetyltransferase (320 aa).

Belongs to the phosphate acetyltransferase and butyryltransferase family.

It is found in the cytoplasm. It catalyses the reaction acetyl-CoA + phosphate = acetyl phosphate + CoA. The protein operates within metabolic intermediate biosynthesis; acetyl-CoA biosynthesis; acetyl-CoA from acetate: step 2/2. This is Phosphate acetyltransferase (pta) from Mycoplasma pneumoniae (strain ATCC 29342 / M129 / Subtype 1) (Mycoplasmoides pneumoniae).